Consider the following 1059-residue polypeptide: Mitogen-activated protein kinase kinase kinase mlk-1 (1059 aa).

Residues 1-66 (MEQASVPSYV…ESSQVSRESP (66 aa)) form a disordered region. Residues 38–48 (DTTTASTSTDS) show a composition bias toward low complexity. An SH3 domain is found at 69 to 130 (RASKAFVASY…PSNYAREVTY (62 aa)). The 305-residue stretch at 150–454 (TLSDCQIGHG…TLAISFKQYA (305 aa)) folds into the Protein kinase domain. Residues 156–164 (IGHGATATV) and K193 contribute to the ATP site. The stretch at 199-224 (ASNFRADVVSTDEQLEQLKREANLVN) forms a coiled coil. Catalysis depends on D297, which acts as the Proton acceptor. S355 carries the phosphoserine; by max-2 and tpa-1 modification. Disordered regions lie at residues 617-699 (PVVS…QTTR) and 714-808 (RAQS…SSSD). Polar residues predominate over residues 623–633 (MDDSNTFSTID). Composition is skewed to basic and acidic residues over residues 639–648 (DPNHSKESKK) and 662–674 (NKRD…DERA). The segment covering 678-689 (SISSRSSSTTSS) has biased composition (low complexity). Polar residues predominate over residues 690–699 (NRLITGQTTR). Positions 749–759 (RYVKDLEKDTP) are enriched in basic and acidic residues. 2 stretches are compositionally biased toward polar residues: residues 774–790 (LDQT…SINN) and 798–808 (SRRTTANSSSD). Positions 937–940 (NPQY) match the NPQY motif motif. Residue Y940 is modified to Phosphotyrosine.

Belongs to the protein kinase superfamily. STE Ser/Thr protein kinase family. MAP kinase kinase kinase subfamily. In terms of assembly, interacts with max-2; the interaction is independent of max-2 and mlk-1 kinase activities. May interact (via NPQY motif when phosphorylated on tyrosine residue) with shc-1 (via PID domain); the interaction may facilitate mek-1 phosphorylation by bringing mlk-1 and mek-1 together. Interacts with svh-2 (via cytoplasmic domain). Interacts with tpa-1. Mg(2+) is required as a cofactor. In terms of processing, may be phosphorylated on tyrosine residues by svh-2. May be ubiquitinated and targeted for proteasomal degradation by E3 ubiquitin ligase rpm-1. As to expression, expressed in pharynx, intestine, hypodermis, neurons and body muscles.

It carries out the reaction L-seryl-[protein] + ATP = O-phospho-L-seryl-[protein] + ADP + H(+). The catalysed reaction is L-threonyl-[protein] + ATP = O-phospho-L-threonyl-[protein] + ADP + H(+). With respect to regulation, activated by phosphorylation at Ser-355. May be activated by svh-2-mediated phosphorylation. Functionally, serine/threonine-protein kinase which, by phosphorylating and activating mek-1, plays an important role in the activation of the JNK pathway composed of mlk-1, mek-1 and kgb-1. Involved in the response to environmental stress such as heavy metals. By activating the JNK pathway downstream of tyrosine receptor svh-2, plays a role in axon regeneration after injury. This is Mitogen-activated protein kinase kinase kinase mlk-1 from Caenorhabditis elegans.